Reading from the N-terminus, the 181-residue chain is Peptidyl-prolyl cis-trans isomerase H (181 aa).

The PPIase cyclophilin-type domain occupies 17–180 (FFDITLGGES…QDVTIIQCGE (164 aa)).

This sequence belongs to the cyclophilin-type PPIase family. PPIase H subfamily.

Its subcellular location is the nucleus. The catalysed reaction is [protein]-peptidylproline (omega=180) = [protein]-peptidylproline (omega=0). In terms of biological role, PPIases accelerate the folding of proteins. It catalyzes the cis-trans isomerization of proline imidic peptide bonds in oligopeptides. This Aspergillus oryzae (strain ATCC 42149 / RIB 40) (Yellow koji mold) protein is Peptidyl-prolyl cis-trans isomerase H (cyp3).